Consider the following 428-residue polypeptide: Serine--tRNA ligase (428 aa).

237–239 (TAE) contributes to the L-serine binding site. 268-270 (RSE) provides a ligand contact to ATP. Glutamate 291 is an L-serine binding site. ATP is bound at residue 355–358 (EISS). Residue serine 390 coordinates L-serine.

This sequence belongs to the class-II aminoacyl-tRNA synthetase family. Type-1 seryl-tRNA synthetase subfamily. In terms of assembly, homodimer. The tRNA molecule binds across the dimer.

It localises to the cytoplasm. The enzyme catalyses tRNA(Ser) + L-serine + ATP = L-seryl-tRNA(Ser) + AMP + diphosphate + H(+). It carries out the reaction tRNA(Sec) + L-serine + ATP = L-seryl-tRNA(Sec) + AMP + diphosphate + H(+). The protein operates within aminoacyl-tRNA biosynthesis; selenocysteinyl-tRNA(Sec) biosynthesis; L-seryl-tRNA(Sec) from L-serine and tRNA(Sec): step 1/1. Its function is as follows. Catalyzes the attachment of serine to tRNA(Ser). Is also able to aminoacylate tRNA(Sec) with serine, to form the misacylated tRNA L-seryl-tRNA(Sec), which will be further converted into selenocysteinyl-tRNA(Sec). This chain is Serine--tRNA ligase, found in Hydrogenovibrio crunogenus (strain DSM 25203 / XCL-2) (Thiomicrospira crunogena).